A 446-amino-acid polypeptide reads, in one-letter code: Ribulose bisphosphate carboxylase large chain (446 aa).

Positions 89 and 139 each coordinate substrate. The active-site Proton acceptor is Lys-141. Lys-143 lines the substrate pocket. The Mg(2+) site is built by Lys-167, Asp-169, and Glu-170. At Lys-167 the chain carries N6-carboxylysine. His-260 serves as the catalytic Proton acceptor. Residues Arg-261, His-293, and Ser-345 each coordinate substrate.

This sequence belongs to the RuBisCO large chain family. Type I subfamily. As to quaternary structure, heterohexadecamer of 8 large chains and 8 small chains; disulfide-linked. The disulfide link is formed within the large subunit homodimers. Requires Mg(2+) as cofactor. Post-translationally, the disulfide bond which can form in the large chain dimeric partners within the hexadecamer appears to be associated with oxidative stress and protein turnover.

It is found in the plastid. The protein resides in the chloroplast. It carries out the reaction 2 (2R)-3-phosphoglycerate + 2 H(+) = D-ribulose 1,5-bisphosphate + CO2 + H2O. It catalyses the reaction D-ribulose 1,5-bisphosphate + O2 = 2-phosphoglycolate + (2R)-3-phosphoglycerate + 2 H(+). In terms of biological role, ruBisCO catalyzes two reactions: the carboxylation of D-ribulose 1,5-bisphosphate, the primary event in carbon dioxide fixation, as well as the oxidative fragmentation of the pentose substrate in the photorespiration process. Both reactions occur simultaneously and in competition at the same active site. The chain is Ribulose bisphosphate carboxylase large chain from Exacum affine (Persian violet).